Consider the following 383-residue polypeptide: Small ribosomal subunit protein mS31 (383 aa).

The N-terminal 21 residues, 1 to 21 (MLRSLCSIAVRLGGARQPRLL), are a transit peptide targeting the mitochondrion. The stretch at 158 to 187 (VNEAQIKLQEQRKALLNDVREKVEQEEVEE) forms a coiled coil.

Belongs to the mitochondrion-specific ribosomal protein mS31 family. Component of the mitochondrial ribosome small subunit (28S) which comprises a 12S rRNA and about 30 distinct proteins.

It localises to the mitochondrion. The protein is Small ribosomal subunit protein mS31 (mrps-31) of Caenorhabditis elegans.